The chain runs to 102 residues: Beta-defensin 116 (102 aa).

The N-terminal stretch at 1 to 23 (MSVMKPCLMTIAILMILAQKTPG) is a signal peptide. Disulfide bonds link cysteine 40-cysteine 67, cysteine 47-cysteine 61, and cysteine 51-cysteine 68. A disordered region spans residues 83–102 (EDYDSNSNLSVTNSSSYSHI). A compositionally biased stretch (low complexity) spans 87 to 102 (SNSNLSVTNSSSYSHI).

This sequence belongs to the beta-defensin family.

Its subcellular location is the secreted. Its function is as follows. Has antibacterial activity. The polypeptide is Beta-defensin 116 (DEFB116) (Homo sapiens (Human)).